Consider the following 356-residue polypeptide: UDP-N-acetylglucosamine--N-acetylmuramyl-(pentapeptide) pyrophosphoryl-undecaprenol N-acetylglucosamine transferase (356 aa).

Residues Ser-195 and Gln-287 each coordinate UDP-N-acetyl-alpha-D-glucosamine.

It belongs to the glycosyltransferase 28 family. MurG subfamily.

The protein localises to the cell membrane. The catalysed reaction is Mur2Ac(oyl-L-Ala-gamma-D-Glu-L-Lys-D-Ala-D-Ala)-di-trans,octa-cis-undecaprenyl diphosphate + UDP-N-acetyl-alpha-D-glucosamine = beta-D-GlcNAc-(1-&gt;4)-Mur2Ac(oyl-L-Ala-gamma-D-Glu-L-Lys-D-Ala-D-Ala)-di-trans,octa-cis-undecaprenyl diphosphate + UDP + H(+). It functions in the pathway cell wall biogenesis; peptidoglycan biosynthesis. Functionally, cell wall formation. Catalyzes the transfer of a GlcNAc subunit on undecaprenyl-pyrophosphoryl-MurNAc-pentapeptide (lipid intermediate I) to form undecaprenyl-pyrophosphoryl-MurNAc-(pentapeptide)GlcNAc (lipid intermediate II). In Streptococcus sanguinis (strain SK36), this protein is UDP-N-acetylglucosamine--N-acetylmuramyl-(pentapeptide) pyrophosphoryl-undecaprenol N-acetylglucosamine transferase.